Here is a 415-residue protein sequence, read N- to C-terminus: Dynein assembly factor with WD repeat domains 1 (415 aa).

8 WD repeats span residues 90–129 (AHILPLTNVALNKAGSCFITGSYDRTCKVWDTASGEELHT), 132–174 (GHKN…HTFR), 175–214 (GHTAEIVCLSFNPQSTVVATGSMDTTAKLWDIQNGEEVVT), 217–256 (GHLAEIISLSFDTSGDRIITGSFDHTVVVWDASTGRKVHT), 259–298 (GHCAEISSALFNWDCSLILTGSMDKTCMLWDATSGKYVAT), 301–340 (GHDDEILDSCFDYTGKLIATASADGTARVYNATTRKCVTK), 343–384 (GHEG…QVLE), and 386–415 (HTDEIFSCAFNYKGNIVITGSKDNSCRIWR).

It belongs to the WD repeat WDR69 family. As to quaternary structure, interacts with IFT46. In terms of tissue distribution, in early mouse embryos, expression is limited to distal, motile ciliated cells of the node.

Its subcellular location is the cytoplasm. The protein resides in the cytoskeleton. The protein localises to the flagellum basal body. It is found in the flagellum axoneme. Its function is as follows. Required for axonemal dynein assembly and ciliary motility in ciliated organs, including Kupffer's vesicle, during embryogenesis. Facilitates the onset of robust cilia motility during development. The polypeptide is Dynein assembly factor with WD repeat domains 1 (Mus musculus (Mouse)).